A 102-amino-acid chain; its full sequence is Small ribosomal subunit protein uS10 (102 aa).

This sequence belongs to the universal ribosomal protein uS10 family. In terms of assembly, part of the 30S ribosomal subunit.

Functionally, involved in the binding of tRNA to the ribosomes. In Acidiphilium cryptum (strain JF-5), this protein is Small ribosomal subunit protein uS10.